We begin with the raw amino-acid sequence, 253 residues long: MAGHSKWANIKRQKARVDAKKAQVFARLSRAMIVAARQGLPDPAANFQLRTAIEKAKAAGIPNDNIERAIAKGAGTLSGDGRQFESVRYEGYGPSGIAILIEALTDNRNRTAANLRAAFSKQGGNLGETGCVSWMFRQRGVVQLTGAIAEADLLKALLDLPAESYDLDESGAIVYCSIADLEALSTQLRQLGYPVEDSELRWIPNDYQLVTDGEQARSLLRLLDTLETLEDVCSVTANLELPPELVTALEATL.

The protein belongs to the TACO1 family.

The protein resides in the cytoplasm. This Synechococcus sp. (strain ATCC 27144 / PCC 6301 / SAUG 1402/1) (Anacystis nidulans) protein is Probable transcriptional regulatory protein syc0529_d.